The primary structure comprises 133 residues: UPF0768 protein C977.18 (133 aa).

The protein belongs to the UPF0768 family.

The protein is UPF0768 protein C977.18 of Schizosaccharomyces pombe (strain 972 / ATCC 24843) (Fission yeast).